A 208-amino-acid chain; its full sequence is uncharacterized protein (208 aa).

Residues 1–18 (MSPTKDSHPSPHFPRDSG) show a composition bias toward basic and acidic residues. Disordered regions lie at residues 1–122 (MSPT…LPPP) and 135–208 (RECH…TPDG).

This is an uncharacterized protein from Homo sapiens (Human).